A 422-amino-acid polypeptide reads, in one-letter code: MDLESKVKKMGLGHEQGFGAPCLKCKDKCEGFELHFWRKICRNCKCGQEEHDVLTSNEEDRKVGKLFEDTKYTTLIAKLKNDGIPMYKRNVMILTNPVPAKKNISINTVTYEWAPPVQNQTLARQYMQMLPKEKQPVAGSEGAQYRKKQLAKQLPAHDQDPSKCHELSPNEVKQMEQFVKKYKNEALGVGDVKLPGELETKATDKNNVNSGDRSTSAAVGAMEDKSADQKASQYSCYRCKLNMKEGDPAVYAERAGYDKLWHPACFVCCTCSELLVDMIYFWKNGNLYCGRHYCDSEKPRCAGCDELIFSNEYTQAEGQNWHLKHFCCFDCDCVLAGEIYVMVNDKPVCRPCYVKKHAAICQGCHNAIDPEVQRVTYNNFNWHATQECFLCSCCSKCLIGQKFMPVEGMVFCSVECKKKMMS.

Residues 92 to 199 form the PET domain; the sequence is MILTNPVPAK…GDVKLPGELE (108 aa). Residues 198-224 are disordered; the sequence is LETKATDKNNVNSGDRSTSAAVGAMED. Over residues 205 to 217 the composition is skewed to polar residues; it reads KNNVNSGDRSTSA. 3 LIM zinc-binding domains span residues 234–297, 299–359, and 362–422; these read YSCY…CDSE, PRCA…KHAA, and QGCH…KMMS.

The protein belongs to the prickle / espinas / testin family.

It is found in the cytoplasm. The protein resides in the cell junction. Its subcellular location is the focal adhesion. Functionally, scaffold protein that may play a role in cell adhesion, cell spreading and in the reorganization of the actin cytoskeleton. May play a role in the regulation of cell proliferation. May inhibit cell growth. The protein is Testin (TES) of Gallus gallus (Chicken).